A 283-amino-acid chain; its full sequence is Thymidylate synthase (283 aa).

Residue arginine 22 coordinates dUMP. The active-site Nucleophile is cysteine 160. Residues 180–183 (RSCD), asparagine 191, and 221–223 (HIY) each bind dUMP. Residue aspartate 183 coordinates (6R)-5,10-methylene-5,6,7,8-tetrahydrofolate. Position 282 (serine 282) interacts with (6R)-5,10-methylene-5,6,7,8-tetrahydrofolate.

The protein belongs to the thymidylate synthase family. Bacterial-type ThyA subfamily. In terms of assembly, homodimer.

The protein localises to the cytoplasm. The enzyme catalyses dUMP + (6R)-5,10-methylene-5,6,7,8-tetrahydrofolate = 7,8-dihydrofolate + dTMP. The protein operates within pyrimidine metabolism; dTTP biosynthesis. In terms of biological role, catalyzes the reductive methylation of 2'-deoxyuridine-5'-monophosphate (dUMP) to 2'-deoxythymidine-5'-monophosphate (dTMP) while utilizing 5,10-methylenetetrahydrofolate (mTHF) as the methyl donor and reductant in the reaction, yielding dihydrofolate (DHF) as a by-product. This enzymatic reaction provides an intracellular de novo source of dTMP, an essential precursor for DNA biosynthesis. The sequence is that of Thymidylate synthase from Vibrio cholerae serotype O1 (strain ATCC 39315 / El Tor Inaba N16961).